The sequence spans 42 residues: Protein MGF 360-20R (42 aa).

It belongs to the asfivirus MGF 360 family.

Plays a role in virus cell tropism, and may be required for efficient virus replication in macrophages. The protein is Protein MGF 360-20R of African swine fever virus (strain Badajoz 1971 Vero-adapted) (Ba71V).